A 454-amino-acid chain; its full sequence is Glutamate mutase epsilon subunit (454 aa).

Arg67 serves as a coordination point for L-glutamate. Gly69 contributes to the adenosylcob(III)alamin binding site. L-glutamate is bound at residue Arg99. Asn122 serves as a coordination point for adenosylcob(III)alamin. Residues 148-149, Glu170, and Tyr176 contribute to the L-glutamate site; that span reads RH. Adenosylcob(III)alamin is bound at residue Pro179. Tyr180 is an L-glutamate binding site. Positions 296, 325, 329, and 333 each coordinate adenosylcob(III)alamin.

The protein belongs to the methylaspartate mutase GlmE subunit family. In terms of assembly, heterotetramer composed of 2 epsilon subunits (GlmE) and 2 sigma subunits (GlmS). GlmE exists as a homodimer and GlmS as a monomer. Requires adenosylcob(III)alamin as cofactor.

The catalysed reaction is (2S,3S)-3-methyl-L-aspartate = L-glutamate. The protein operates within amino-acid degradation; L-glutamate degradation via mesaconate pathway; acetate and pyruvate from L-glutamate: step 1/4. Catalyzes the carbon skeleton rearrangement of L-glutamate to L-threo-3-methylaspartate ((2S,3S)-3-methylaspartate). The sequence is that of Glutamate mutase epsilon subunit from Shigella dysenteriae serotype 1 (strain Sd197).